The sequence spans 441 residues: GTPase Der (441 aa).

2 EngA-type G domains span residues 2-164 (QKVA…PADE) and 173-343 (IRIS…EKWQ). GTP is bound by residues 8-15 (GRPNVGKS), 55-59 (DTGGL), 116-119 (NKID), 179-186 (GRPNVGKS), 226-230 (DTAGI), and 288-291 (NKWD). The KH-like domain maps to 344–428 (SRIPTAELNR…PVRLKWKEKG (85 aa)).

The protein belongs to the TRAFAC class TrmE-Era-EngA-EngB-Septin-like GTPase superfamily. EngA (Der) GTPase family. In terms of assembly, associates with the 50S ribosomal subunit.

GTPase that plays an essential role in the late steps of ribosome biogenesis. This is GTPase Der from Deinococcus geothermalis (strain DSM 11300 / CIP 105573 / AG-3a).